Consider the following 396-residue polypeptide: Elongation factor Tu (396 aa).

In terms of domain architecture, tr-type G spans 10 to 206 (KPHCNIGTIG…AVDAYIPQPE (197 aa)). Residues 19–26 (GHVDHGKT) form a G1 region. A GTP-binding site is contributed by 19–26 (GHVDHGKT). Threonine 26 contacts Mg(2+). The G2 stretch occupies residues 60-64 (GITIS). Residues 81 to 84 (DCPG) form a G3 region. GTP contacts are provided by residues 81-85 (DCPGH) and 136-139 (NKCD). The interval 136-139 (NKCD) is G4. The interval 174-176 (SAL) is G5.

It belongs to the TRAFAC class translation factor GTPase superfamily. Classic translation factor GTPase family. EF-Tu/EF-1A subfamily. Monomer.

It localises to the cytoplasm. It carries out the reaction GTP + H2O = GDP + phosphate + H(+). GTP hydrolase that promotes the GTP-dependent binding of aminoacyl-tRNA to the A-site of ribosomes during protein biosynthesis. This is Elongation factor Tu from Nitrobacter winogradskyi (strain ATCC 25391 / DSM 10237 / CIP 104748 / NCIMB 11846 / Nb-255).